Here is a 211-residue protein sequence, read N- to C-terminus: Arginine exporter protein ArgO (211 aa).

The next 6 helical transmembrane spans lie at 1-21, 37-57, 68-88, 111-131, 147-167, and 179-199; these read MISY…PLGP, LMIA…GIFG, LLAL…FGAL, IIAT…DTFV, WFAL…ALLA, and AQRI…FQLA.

Belongs to the LysE/ArgO transporter (TC 2.A.75) family.

The protein localises to the cell inner membrane. It catalyses the reaction L-arginine(in) = L-arginine(out). Involved in the export of arginine. Important to control the intracellular level of arginine and the correct balance between arginine and lysine. This chain is Arginine exporter protein ArgO, found in Salmonella paratyphi B (strain ATCC BAA-1250 / SPB7).